A 377-amino-acid chain; its full sequence is N5-carboxyaminoimidazole ribonucleotide synthase (377 aa).

Residues R93, K133, 138–144, 175–178, E183, H206, and 257–258 contribute to the ATP site; these read GYDGKGQ, EEFV, and NE. In terms of domain architecture, ATP-grasp spans 97–287; that stretch reads KALLDHAGVR…QFENHLRAVC (191 aa).

The protein belongs to the PurK/PurT family. Homodimer.

The enzyme catalyses 5-amino-1-(5-phospho-beta-D-ribosyl)imidazole + hydrogencarbonate + ATP = 5-carboxyamino-1-(5-phospho-D-ribosyl)imidazole + ADP + phosphate + 2 H(+). The protein operates within purine metabolism; IMP biosynthesis via de novo pathway; 5-amino-1-(5-phospho-D-ribosyl)imidazole-4-carboxylate from 5-amino-1-(5-phospho-D-ribosyl)imidazole (N5-CAIR route): step 1/2. In terms of biological role, catalyzes the ATP-dependent conversion of 5-aminoimidazole ribonucleotide (AIR) and HCO(3)(-) to N5-carboxyaminoimidazole ribonucleotide (N5-CAIR). The polypeptide is N5-carboxyaminoimidazole ribonucleotide synthase (Vibrio vulnificus (strain CMCP6)).